We begin with the raw amino-acid sequence, 601 residues long: Probable cytochrome P450 525A1 (601 aa).

The chain crosses the membrane as a helical span at residues 12–32; sequence ISYFLTCSIFGFILWILTEQI. The disordered stretch occupies residues 205 to 253; that stretch reads NNNNNNNNNNNNNNNNNNNNNNNNNNNNNNNNNNNNNNNNNNNNNNNNN. Cysteine 544 contacts heme.

Belongs to the cytochrome P450 family. The cofactor is heme.

The protein localises to the membrane. In Dictyostelium discoideum (Social amoeba), this protein is Probable cytochrome P450 525A1 (cyp525A1).